The following is a 181-amino-acid chain: Isopentenyl-diphosphate Delta-isomerase (181 aa).

Mn(2+)-binding residues include histidine 25 and histidine 32. The Nudix hydrolase domain occupies leucine 30 to leucine 164. Cysteine 67 is an active-site residue. Histidine 69 is a binding site for Mn(2+). Mg(2+) is bound at residue glutamate 87. Residues glutamate 114 and glutamate 116 each contribute to the Mn(2+) site. Glutamate 116 is an active-site residue.

The protein belongs to the IPP isomerase type 1 family. Homodimer. Mg(2+) is required as a cofactor. Requires Mn(2+) as cofactor.

It is found in the cytoplasm. The enzyme catalyses isopentenyl diphosphate = dimethylallyl diphosphate. It functions in the pathway isoprenoid biosynthesis; dimethylallyl diphosphate biosynthesis; dimethylallyl diphosphate from isopentenyl diphosphate: step 1/1. In terms of biological role, catalyzes the 1,3-allylic rearrangement of the homoallylic substrate isopentenyl (IPP) to its highly electrophilic allylic isomer, dimethylallyl diphosphate (DMAPP). The sequence is that of Isopentenyl-diphosphate Delta-isomerase from Citrobacter koseri (strain ATCC BAA-895 / CDC 4225-83 / SGSC4696).